The chain runs to 752 residues: Ribonucleases P/MRP protein subunit popl-1 (752 aa).

Positions 638-663 are disordered; that stretch reads KTTKRKRVNRKKRESKKRRKIEQEKR. Positions 640–657 are enriched in basic residues; that stretch reads TKRKRVNRKKRESKKRRK.

As to quaternary structure, component of nuclear RNase P and RNase MRP ribonucleoproteins. Several subunits of RNase P are also part of the RNase MRP complex.

It localises to the nucleus. The protein localises to the nucleolus. The catalysed reaction is Endonucleolytic cleavage of RNA, removing 5'-extranucleotides from tRNA precursor.. Its function is as follows. Component of ribonuclease P, a ribonucleoprotein complex that generates mature tRNA molecules by cleaving their 5'-ends. Also a component of the MRP ribonuclease complex, which cleaves pre-rRNA sequences. In Caenorhabditis elegans, this protein is Ribonucleases P/MRP protein subunit popl-1.